Consider the following 828-residue polypeptide: Fibroblast growth factor receptor 4 (828 aa).

Residues 1 to 31 (MSGSIRRSYTAMQNFPRFLLGVLFVATLSSC) form the signal peptide. At 32–392 (RPRLSEDEAN…AEPAESRYMD (361 aa)) the chain is on the extracellular side. The Ig-like C2-type 1 domain occupies 33–127 (PRLSEDEANW…GKILRRFSIS (95 aa)). A disulfide bridge connects residues cysteine 67 and cysteine 112. Asparagine 70 carries N-linked (GlcNAc...) asparagine glycosylation. The disordered stretch occupies residues 132 to 156 (LASGDEEEEEEDDDDEDGRREDTTA). Positions 135–147 (GDEEEEEEDDDDE) are enriched in acidic residues. 2 Ig-like C2-type domains span residues 169-259 (PYWT…LTYT) and 272-372 (PILQ…AWLT). Cysteine 194 and cysteine 247 form a disulfide bridge. N-linked (GlcNAc...) asparagine glycans are attached at residues asparagine 244, asparagine 281, asparagine 313, and asparagine 345. A disulfide bond links cysteine 294 and cysteine 356. Residues 393–413 (IIIYTSGFLAVAMAIMIVILC) form a helical membrane-spanning segment. At 414–828 (RMQTPHSKQT…YHNIHSQLGT (415 aa)) the chain is on the cytoplasmic side. Residues 490–777 (LVLGKPLGEG…ILTAVSEEYL (288 aa)) enclose the Protein kinase domain. Residues 496–504 (LGEGCFGQV) and lysine 526 contribute to the ATP site. Aspartate 635 (proton acceptor) is an active-site residue. Tyrosine 665, tyrosine 666, and tyrosine 776 each carry phosphotyrosine; by autocatalysis.

This sequence belongs to the protein kinase superfamily. Tyr protein kinase family. Fibroblast growth factor receptor subfamily. Post-translationally, ubiquitinated. Subject to proteasomal degradation when not fully glycosylated. Autophosphorylated. Binding of FGF family members together with heparan sulfate proteoglycan or heparin promotes receptor dimerization and autophosphorylation on tyrosine residues. Autophosphorylation occurs in trans between the two FGFR molecules present in the dimer.

It localises to the cell membrane. It is found in the endosome. The protein localises to the endoplasmic reticulum. The enzyme catalyses L-tyrosyl-[protein] + ATP = O-phospho-L-tyrosyl-[protein] + ADP + H(+). Present in an inactive conformation in the absence of bound ligand. Ligand binding leads to dimerization and activation by autophosphorylation on tyrosine residues. Its function is as follows. Tyrosine-protein kinase that acts as a cell-surface receptor for fibroblast growth factors and plays a role in the regulation of cell proliferation, differentiation and migration, and in regulation of lipid metabolism, bile acid biosynthesis, glucose uptake, vitamin D metabolism and phosphate homeostasis. Required for normal down-regulation of the expression of CYP7A1, the rate-limiting enzyme in bile acid synthesis, in response to FGF19. Phosphorylates PLCG1 and FRS2. Ligand binding leads to the activation of several signaling cascades. Activation of PLCG1 leads to the production of the cellular signaling molecules diacylglycerol and inositol 1,4,5-trisphosphate. Phosphorylation of FRS2 triggers recruitment of GRB2, GAB1, PIK3R1 and SOS1, and mediates activation of RAS, MAPK1/ERK2, MAPK3/ERK1 and the MAP kinase signaling pathway, as well as of the AKT1 signaling pathway. This chain is Fibroblast growth factor receptor 4 (fgfr4), found in Xenopus laevis (African clawed frog).